Consider the following 463-residue polypeptide: tRNA modification GTPase MnmE (463 aa).

(6S)-5-formyl-5,6,7,8-tetrahydrofolate contacts are provided by R30, E92, and R132. The 160-residue stretch at G227–G386 folds into the TrmE-type G domain. K(+) is bound at residue N237. GTP contacts are provided by residues N237–S242, T256–T262, D281–G284, and N342–D345. S241 serves as a coordination point for Mg(2+). K(+)-binding residues include T256, L258, and T261. T262 is a Mg(2+) binding site. Residue K463 coordinates (6S)-5-formyl-5,6,7,8-tetrahydrofolate.

This sequence belongs to the TRAFAC class TrmE-Era-EngA-EngB-Septin-like GTPase superfamily. TrmE GTPase family. Homodimer. Heterotetramer of two MnmE and two MnmG subunits. Requires K(+) as cofactor.

It localises to the cytoplasm. Functionally, exhibits a very high intrinsic GTPase hydrolysis rate. Involved in the addition of a carboxymethylaminomethyl (cmnm) group at the wobble position (U34) of certain tRNAs, forming tRNA-cmnm(5)s(2)U34. The polypeptide is tRNA modification GTPase MnmE (Synechococcus sp. (strain CC9311)).